We begin with the raw amino-acid sequence, 596 residues long: MPTQRDSSTMSHTVACGGGGDHSHQVRVKAYYRGDIMITHFEPSISFEGLCSEVRDMCSFDNEQPFTMKWIDEEGDPCTVSSQLELEEAFRLYELNKDSELLIHVFPCVPERPGMPCPGEDKSIYRRGARRWRKLYCANGHTFQAKRFNRRAHCAICTDRIWGLGRQGYKCINCKLLVHKKCHKLVTIECGRHSLPPEPMMPMDQSSMHPDHTQTVIPYNPSSHESLDQVGEEKEAMNTRESGKASSSLGLQDFDLLRVIGRGSYAKVLLVRLKKTDRIYAMKVVKKELVNDDEDIDWVQTEKHVFEQASNHPFLVGLHSCFQTESRLFFVIEYVNGGDLMFHMQRQRKLPEEHARFYSAEISLALNYLHERGIIYRDLKLDNVLLDSEGHIKLTDYGMCKEGLRPGDTTSTFCGTPNYIAPEILRGEDYGFSVDWWALGVLMFEMMAGRSPFDIVGSSDNPDQNTEDYLFQVILEKQIRIPRSLSVKAASVLKSFLNKDPKERLGCHPQTGFADIQGHPFFRNVDWDMMEQKQVVPPFKPNISGEFGLDNFDSQFTNEPVQLTPDDDDIVRKIDQSEFEGFEYINPLLMSAEECV.

The segment covering 1–12 (MPTQRDSSTMSH) has biased composition (polar residues). Residues 1–21 (MPTQRDSSTMSHTVACGGGGD) are disordered. Proline 2 bears the N-acetylproline mark. Residues 2–28 (PTQRDSSTMSHTVACGGGGDHSHQVRV) are required for interaction with RAB2. Residues 2 to 253 (PTQRDSSTMS…KASSSLGLQD (252 aa)) form a regulatory domain region. Position 3 is a phosphothreonine (threonine 3). Phosphoserine occurs at positions 7 and 8. At threonine 9 the chain carries Phosphothreonine. In terms of domain architecture, PB1 spans 25–108 (QVRVKAYYRG…SELLIHVFPC (84 aa)). The interval 72–91 (DEEGDPCTVSSQLELEEAFR) is interaction with PARD6A. Positions 125-134 (YRRGARRWRK) match the Pseudosubstrate motif. Residues 140–190 (GHTFQAKRFNRRAHCAICTDRIWGLGRQGYKCINCKLLVHKKCHKLVTIEC) form a Phorbol-ester/DAG-type zinc finger. One can recognise a Protein kinase domain in the interval 254-522 (FDLLRVIGRG…FADIQGHPFF (269 aa)). 260–268 (IGRGSYAKV) serves as a coordination point for ATP. A phosphotyrosine; by SRC mark is found at tyrosine 265 and tyrosine 280. Lysine 283 lines the ATP pocket. Phosphotyrosine; by SRC is present on tyrosine 334. The Proton acceptor role is filled by aspartate 378. Threonine 412 carries the post-translational modification Phosphothreonine; by PDPK1. The AGC-kinase C-terminal domain occupies 523 to 594 (RNVDWDMMEQ…INPLLMSAEE (72 aa)). A Phosphothreonine modification is found at threonine 564.

The protein belongs to the protein kinase superfamily. AGC Ser/Thr protein kinase family. PKC subfamily. In terms of assembly, forms a complex with SQSTM1 and MP2K5. Interacts directly with SQSTM1. Interacts with IKBKB. Interacts with PARD6A, PARD6B and PARD6G. Part of a quaternary complex containing aPKC, PARD3, a PARD6 protein (PARD6A, PARD6B or PARD6G) and a GTPase protein (CDC42 or RAC1). Part of a complex with LLGL1 and PARD6B. Interacts with ADAP1/CENTA1. Interaction with SMG1, through the ZN-finger domain, activates the kinase activity. Interacts with CDK7. Forms a complex with RAB2A and GAPDH involved in recruitment onto the membrane of vesicular tubular clusters (VTCs). Interacts with ECT2 ('Thr-359' phosphorylated form). Interacts with VAMP2. Interacts with WDFY2 (via WD repeats 1-3). Phosphorylation at Thr-412 in the activation loop is not mandatory for activation. Upon neuronal growth factor (NGF) stimulation, phosphorylated by SRC at Tyr-265, Tyr-280 and Tyr-334. Phosphorylation at Tyr-265 facilitates binding to KPNB1/importin-beta regulating entry of PRKCI into the nucleus. Phosphorylation on Tyr-334 is important for NF-kappa-B stimulation. Phosphorylated at Thr-564 during the initial phase of long term potentiation. As to expression, expressed in dorsal hippocampus (at protein level).

The protein localises to the cytoplasm. The protein resides in the membrane. It is found in the endosome. Its subcellular location is the nucleus. It catalyses the reaction L-seryl-[protein] + ATP = O-phospho-L-seryl-[protein] + ADP + H(+). The enzyme catalyses L-threonyl-[protein] + ATP = O-phospho-L-threonyl-[protein] + ADP + H(+). Its activity is regulated as follows. Atypical PKCs (PRKCI and PRKCZ) exhibit an elevated basal enzymatic activity (that may be due to the interaction with SMG1 or SQSTM1) and are not regulated by diacylglycerol, phosphatidylserine, phorbol esters or calcium ions. Two specific sites, Thr-412 (activation loop of the kinase domain) and Thr-564 (turn motif), need to be phosphorylated for its full activation. Might also be a target for novel lipid activators that are elevated during nutrient-stimulated insulin secretion. Functionally, calcium- and diacylglycerol-independent serine/ threonine-protein kinase that plays a general protective role against apoptotic stimuli, is involved in NF-kappa-B activation, cell survival, differentiation and polarity, and contributes to the regulation of microtubule dynamics in the early secretory pathway. Is necessary for BCR-ABL oncogene-mediated resistance to apoptotic drug in leukemia cells, protecting leukemia cells against drug-induced apoptosis. In cultured neurons, prevents amyloid beta protein-induced apoptosis by interrupting cell death process at a very early step. In glioblastoma cells, may function downstream of phosphatidylinositol 3-kinase (PI3K) and PDPK1 in the promotion of cell survival by phosphorylating and inhibiting the pro-apoptotic factor BAD. Can form a protein complex in non-small cell lung cancer (NSCLC) cells with PARD6A and ECT2 and regulate ECT2 oncogenic activity by phosphorylation, which in turn promotes transformed growth and invasion. In response to nerve growth factor (NGF), acts downstream of SRC to phosphorylate and activate IRAK1, allowing the subsequent activation of NF-kappa-B and neuronal cell survival. Functions in the organization of the apical domain in epithelial cells by phosphorylating EZR. This step is crucial for activation and normal distribution of EZR at the early stages of intestinal epithelial cell differentiation. Forms a protein complex with LLGL1 and PARD6B independently of PARD3 to regulate epithelial cell polarity. Plays a role in microtubule dynamics in the early secretory pathway through interaction with RAB2A and GAPDH and recruitment to vesicular tubular clusters (VTCs). In human coronary artery endothelial cells (HCAEC), is activated by saturated fatty acids and mediates lipid-induced apoptosis. Downstream of PI3K is required for insulin-stimulated glucose transport. Activates RAB4A and promotes its association with KIF3A which is required for the insulin-induced SLC2A4/GLUT4 translocation in adipocytes. Is essential in early embryogenesis and development of differentiating photoreceptors by playing a role in the establishment of epithelial and neuronal polarity. Involved in early synaptic long term potentiation phase in CA1 hippocampal cells and short term memory formation. This Rattus norvegicus (Rat) protein is Protein kinase C iota type (Prkci).